We begin with the raw amino-acid sequence, 757 residues long: Transferrin receptor protein 1 (757 aa).

Residues 1 to 67 (MMDQARSAIS…KHRRLNGRLC (67 aa)) lie on the Cytoplasmic side of the membrane. Residues 1–67 (MMDQARSAIS…KHRRLNGRLC (67 aa)) form a mediates interaction with SH3BP4 region. Residues serine 10 and serine 19 each carry the phosphoserine modification. The residue at position 20 (tyrosine 20) is a Phosphotyrosine. The Endocytosis signal signature appears at 20 to 23 (YTRF). Residue threonine 21 is modified to Phosphothreonine. Residue serine 24 is modified to Phosphoserine. The Stop-transfer sequence motif lies at 58-61 (KHRR). The S-palmitoyl cysteine moiety is linked to residue cysteine 67. The helical; Signal-anchor for type II membrane protein transmembrane segment at 68–88 (FGTIAVVIFFLIGFMIGYLGY) threads the bilayer. The Extracellular segment spans residues 89–757 (CKRTEQKDCV…GDIWDIDNEF (669 aa)). An O-linked (GalNAc...) threonine glycan is attached at threonine 103. Residues 220-310 (SKATTVSGKL…GTGDPYTPGF (91 aa)) form the PA domain. N-linked (GlcNAc...) asparagine glycosylation is found at asparagine 248 and asparagine 314. Residues 566–757 (NLDTYEKLIQ…GDIWDIDNEF (192 aa)) form a ligand-binding region. The Cell attachment site motif lies at 643-645 (RGD). Asparagine 719 and asparagine 724 each carry an N-linked (GlcNAc...) asparagine glycan.

The protein belongs to the peptidase M28 family. M28B subfamily. Homodimer; disulfide-linked. Binds one transferrin molecule per subunit. Interacts with SH3BP4. Interacts with STEAP3; facilitates TFRC endocytosis in erythroid precursor cells. In terms of processing, stearoylated by ZDHHC6 which inhibits TFRC-mediated activation of the JNK pathway and promotes mitochondrial fragmentation. Stearoylation does not affect iron uptake. N- and O-glycosylated, phosphorylated and palmitoylated.

Its subcellular location is the cell membrane. The protein resides in the melanosome. Its function is as follows. Cellular uptake of iron occurs via receptor-mediated endocytosis of ligand-occupied transferrin receptor into specialized endosomes. Endosomal acidification leads to iron release. The apotransferrin-receptor complex is then recycled to the cell surface with a return to neutral pH and the concomitant loss of affinity of apotransferrin for its receptor. Transferrin receptor is necessary for development of erythrocytes and the nervous system. Positively regulates T and B cell proliferation through iron uptake. Acts as a lipid sensor that regulates mitochondrial fusion by regulating activation of the JNK pathway. When dietary levels of stearate (C18:0) are low, promotes activation of the JNK pathway, resulting in HUWE1-mediated ubiquitination and subsequent degradation of the mitofusin MFN2 and inhibition of mitochondrial fusion. When dietary levels of stearate (C18:0) are high, TFRC stearoylation inhibits activation of the JNK pathway and thus degradation of the mitofusin MFN2. Mediates uptake of NICOL1 into fibroblasts where it may regulate extracellular matrix production. This Cricetulus griseus (Chinese hamster) protein is Transferrin receptor protein 1 (TFRC).